Reading from the N-terminus, the 612-residue chain is U-box domain-containing protein 11 (612 aa).

Residues 127 to 196 are a coiled coil; the sequence is DEVGEQVELA…LHFGEEEEKQ (70 aa). In terms of domain architecture, U-box spans 240–314; the sequence is TIPVDFLCPV…SRWCAEHNIE (75 aa). ARM repeat units follow at residues 363 to 402, 404 to 443, 445 to 484, 486 to 526, and 528 to 567; these read TDNR…NLSI, ENNK…SLSL, DENK…NLCI, HGNK…VLAN, and QDAK…SLCK.

The catalysed reaction is S-ubiquitinyl-[E2 ubiquitin-conjugating enzyme]-L-cysteine + [acceptor protein]-L-lysine = [E2 ubiquitin-conjugating enzyme]-L-cysteine + N(6)-ubiquitinyl-[acceptor protein]-L-lysine.. The protein operates within protein modification; protein ubiquitination. In terms of biological role, functions as an E3 ubiquitin ligase. This Arabidopsis thaliana (Mouse-ear cress) protein is U-box domain-containing protein 11 (PUB11).